A 182-amino-acid polypeptide reads, in one-letter code: Troponin I, fast skeletal muscle (182 aa).

Gly-2 carries the N-acetylglycine modification. Residues 2 to 48 (GDEEKRNRAITARRQHLKSVMLQIAATELEKEESRRESEKENYLSEH) are involved in binding TNC. The residue at position 12 (Thr-12) is a Phosphothreonine. Residues 29–45 (ELEKEESRRESEKENYL) are compositionally biased toward basic and acidic residues. The tract at residues 29-53 (ELEKEESRRESEKENYLSEHCPPLH) is disordered. The segment at 97–117 (NQKLFDLRGKFKRPPLRRVRM) is involved in binding TNC and actin. Ser-118 is subject to Phosphoserine.

Belongs to the troponin I family. Binds to actin and tropomyosin.

Functionally, troponin I is the inhibitory subunit of troponin, the thin filament regulatory complex which confers calcium-sensitivity to striated muscle actomyosin ATPase activity. This Mus musculus (Mouse) protein is Troponin I, fast skeletal muscle (Tnni2).